Consider the following 270-residue polypeptide: uncharacterized protein (270 aa).

A compositionally biased stretch (basic and acidic residues) spans 22 to 31 (EAPQRTEASR). The interval 22 to 42 (EAPQRTEASRTHPSPFLALPG) is disordered.

This is an uncharacterized protein from Homo sapiens (Human).